The sequence spans 283 residues: MKQYLDLCNRIVNEGEWVSNERTGKRCLTVINADLTYDVSKGEFPLVTTRKSYWKSAIAEIIGYLRGYDNAADFRALGTKTWDANANENEVWLNSPYRKGEDDMGLCYGAIGRNFPKPDGGHIDLLKQIIDDLSRGVDNRGEILTFYHPGAFHMACLRPCMYSHHFSLLGDTLYLNSTQRSCDVPLGLNFNMVQVYVLLAIVAQITGKKPGKAFHKIVNAHIYEDQLELMRDVQLKREPYPLPTLKINPEIKSLKDIETWVTMDDFEIEGYQFHEPIAYPFSV.

Arg22 contacts dUMP. Cys160 functions as the Nucleophile in the catalytic mechanism. DUMP-binding positions include 180–183 (RSCD), Asn191, and 221–223 (HIY). Asp183 is a (6R)-5,10-methylene-5,6,7,8-tetrahydrofolate binding site. Position 282 (Ser282) interacts with (6R)-5,10-methylene-5,6,7,8-tetrahydrofolate.

This sequence belongs to the thymidylate synthase family. Bacterial-type ThyA subfamily. Homodimer.

The protein localises to the cytoplasm. It carries out the reaction dUMP + (6R)-5,10-methylene-5,6,7,8-tetrahydrofolate = 7,8-dihydrofolate + dTMP. It participates in pyrimidine metabolism; dTTP biosynthesis. Its function is as follows. Catalyzes the reductive methylation of 2'-deoxyuridine-5'-monophosphate (dUMP) to 2'-deoxythymidine-5'-monophosphate (dTMP) while utilizing 5,10-methylenetetrahydrofolate (mTHF) as the methyl donor and reductant in the reaction, yielding dihydrofolate (DHF) as a by-product. This enzymatic reaction provides an intracellular de novo source of dTMP, an essential precursor for DNA biosynthesis. The sequence is that of Thymidylate synthase from Marinomonas sp. (strain MWYL1).